We begin with the raw amino-acid sequence, 243 residues long: Type III pantothenate kinase (243 aa).

D7–K14 serves as a coordination point for ATP. Substrate is bound by residues Y95 and G102–R105. The active-site Proton acceptor is the D104. T126 contacts ATP. Residue T177 coordinates substrate.

It belongs to the type III pantothenate kinase family. Homodimer. NH4(+) serves as cofactor. It depends on K(+) as a cofactor.

It is found in the cytoplasm. It catalyses the reaction (R)-pantothenate + ATP = (R)-4'-phosphopantothenate + ADP + H(+). Its pathway is cofactor biosynthesis; coenzyme A biosynthesis; CoA from (R)-pantothenate: step 1/5. Catalyzes the phosphorylation of pantothenate (Pan), the first step in CoA biosynthesis. The chain is Type III pantothenate kinase from Acinetobacter baylyi (strain ATCC 33305 / BD413 / ADP1).